Consider the following 302-residue polypeptide: MYWFKNAMIYKLTKELDWSEDKLQQNLAQCAYHPCGQSDMSKFGWTTPLRGAELFCFSVGKQILLVAHKEEKIIPAHVIKRELDNRINELEEKENRKLKKTEKQALKDDVVSVLLPRAFSKNQQTAIWIDTEKNLIYVDAASSKRAEDVLALLRKSLGSLPVVPLAFANEPSMVMTDWIIKNDMPQWLVPLEEAELKAADDRGIIRCKNQALDSEEMISHLQAGKFVTKLALEWEEHLTFVLNDDGTLKRLKFADMIREKNDDILKEDFAQRFDADFILMTGELAKLTENLIEHFGGEKNRL.

The protein belongs to the RdgC family.

The protein resides in the cytoplasm. Its subcellular location is the nucleoid. Its function is as follows. May be involved in recombination. This chain is Recombination-associated protein RdgC, found in Mannheimia succiniciproducens (strain KCTC 0769BP / MBEL55E).